Reading from the N-terminus, the 232-residue chain is Large ribosomal subunit protein uL1 (232 aa).

It belongs to the universal ribosomal protein uL1 family. Part of the 50S ribosomal subunit.

Its function is as follows. Binds directly to 23S rRNA. The L1 stalk is quite mobile in the ribosome, and is involved in E site tRNA release. In terms of biological role, protein L1 is also a translational repressor protein, it controls the translation of the L11 operon by binding to its mRNA. This chain is Large ribosomal subunit protein uL1, found in Bacillus cereus (strain ATCC 14579 / DSM 31 / CCUG 7414 / JCM 2152 / NBRC 15305 / NCIMB 9373 / NCTC 2599 / NRRL B-3711).